Reading from the N-terminus, the 300-residue chain is Fluorinase (300 aa).

Residues aspartate 16, 21–23 (DDS), tyrosine 77, serine 158, aspartate 211, asparagine 216, 270–271 (SR), and 278–280 (RNA) each bind S-adenosyl-L-methionine.

It belongs to the SAM hydrolase / SAM-dependent halogenase family. Homohexamer.

The catalysed reaction is fluoride + S-adenosyl-L-methionine = 5'-deoxy-5'-fluoroadenosine + L-methionine. It catalyses the reaction chloride + S-adenosyl-L-methionine = 5'-chloro-5'-deoxyadenosine + L-methionine. With respect to regulation, activity is severely inhibited by 1 mM Cu(2+) or Zn(2+). In terms of biological role, catalyzes the formation of a C-F bond by combining S-adenosyl-L-methionine (SAM) and fluoride to generate 5'-fluoro-5'-deoxyadenosine (5'-FDA) and L-methionine. Probably involved in fluoroacetate (FAc) and 4-fluorothreonine (4-FT) biosynthesis. In vitro, can also catalyze the conversion of chloride and SAM to 5'-chloro-5'-deoxyadenosine (5'-CIDA) and L-methionine in the presence of L-amino acid oxidase. This Nocardia brasiliensis (strain ATCC 700358 / HUJEG-1) protein is Fluorinase.